A 265-amino-acid chain; its full sequence is tRNA pseudouridine synthase A (265 aa).

Asp58 functions as the Nucleophile in the catalytic mechanism. Tyr116 contacts substrate.

The protein belongs to the tRNA pseudouridine synthase TruA family. Homodimer.

The enzyme catalyses uridine(38/39/40) in tRNA = pseudouridine(38/39/40) in tRNA. In terms of biological role, formation of pseudouridine at positions 38, 39 and 40 in the anticodon stem and loop of transfer RNAs. This Neisseria meningitidis serogroup B (strain ATCC BAA-335 / MC58) protein is tRNA pseudouridine synthase A.